Here is a 139-residue protein sequence, read N- to C-terminus: Protein AC53 (139 aa).

It localises to the host cytoplasm. It is found in the host nucleus. Plays a role in nucleocapsid assembly. This Lepidoptera (butterflies and moths) protein is Protein AC53 (AC53).